We begin with the raw amino-acid sequence, 318 residues long: Transaldolase (318 aa).

The Schiff-base intermediate with substrate role is filled by Lys132.

It belongs to the transaldolase family. Type 1 subfamily. Homodimer.

The protein resides in the cytoplasm. It catalyses the reaction D-sedoheptulose 7-phosphate + D-glyceraldehyde 3-phosphate = D-erythrose 4-phosphate + beta-D-fructose 6-phosphate. It participates in carbohydrate degradation; pentose phosphate pathway; D-glyceraldehyde 3-phosphate and beta-D-fructose 6-phosphate from D-ribose 5-phosphate and D-xylulose 5-phosphate (non-oxidative stage): step 2/3. Functionally, transaldolase is important for the balance of metabolites in the pentose-phosphate pathway. The polypeptide is Transaldolase (Shewanella baltica (strain OS155 / ATCC BAA-1091)).